A 344-amino-acid polypeptide reads, in one-letter code: Phosphate acyltransferase (344 aa).

It belongs to the PlsX family. In terms of assembly, homodimer. Probably interacts with PlsY.

The protein resides in the cytoplasm. It catalyses the reaction a fatty acyl-[ACP] + phosphate = an acyl phosphate + holo-[ACP]. The protein operates within lipid metabolism; phospholipid metabolism. Functionally, catalyzes the reversible formation of acyl-phosphate (acyl-PO(4)) from acyl-[acyl-carrier-protein] (acyl-ACP). This enzyme utilizes acyl-ACP as fatty acyl donor, but not acyl-CoA. This Erwinia tasmaniensis (strain DSM 17950 / CFBP 7177 / CIP 109463 / NCPPB 4357 / Et1/99) protein is Phosphate acyltransferase.